The primary structure comprises 293 residues: Ribosomal protein L11 methyltransferase (293 aa).

The S-adenosyl-L-methionine site is built by Thr-145, Gly-166, Asp-188, and Asn-230.

Belongs to the methyltransferase superfamily. PrmA family.

The protein resides in the cytoplasm. The catalysed reaction is L-lysyl-[protein] + 3 S-adenosyl-L-methionine = N(6),N(6),N(6)-trimethyl-L-lysyl-[protein] + 3 S-adenosyl-L-homocysteine + 3 H(+). In terms of biological role, methylates ribosomal protein L11. The chain is Ribosomal protein L11 methyltransferase from Salmonella dublin (strain CT_02021853).